A 505-amino-acid polypeptide reads, in one-letter code: Tyrosine-protein kinase FRK (505 aa).

Residues S37 and S40 each carry the phosphoserine modification. One can recognise an SH3 domain in the interval 42 to 110 (RHGHYFVALF…PSNYVAEDRS (69 aa)). Residues 116-208 (WFFGAIGRSD…GLCVKLGKPC (93 aa)) form the SH2 domain. Phosphothreonine is present on T178. Residues 234 to 491 (IQLLKRLGSG…TLRWKLEDYF (258 aa)) form the Protein kinase domain. ATP-binding positions include 240–248 (LGSGQFGEV) and K262. The Proton acceptor role is filled by D354. Y387 carries the post-translational modification Phosphotyrosine; by autocatalysis.

This sequence belongs to the protein kinase superfamily. Tyr protein kinase family. SRC subfamily. Interacts (via the SH3-domain) with PTEN. Interacts with RB1. As to expression, predominantly expressed in epithelial derived cell lines and tissues, especially normal liver, kidney, breast and colon.

Its subcellular location is the cytoplasm. It localises to the nucleus. It carries out the reaction L-tyrosyl-[protein] + ATP = O-phospho-L-tyrosyl-[protein] + ADP + H(+). Non-receptor tyrosine-protein kinase that negatively regulates cell proliferation. Positively regulates PTEN protein stability through phosphorylation of PTEN on 'Tyr-336', which in turn prevents its ubiquitination and degradation, possibly by reducing its binding to NEDD4. May function as a tumor suppressor. The protein is Tyrosine-protein kinase FRK (FRK) of Homo sapiens (Human).